The chain runs to 323 residues: tRNA dimethylallyltransferase (323 aa).

12–19 is an ATP binding site; it reads GPTAAGKT. Residue 14–19 participates in substrate binding; that stretch reads TAAGKT. 2 interaction with substrate tRNA regions span residues 37-40 and 161-165; these read DSAL and QRLIR.

Belongs to the IPP transferase family. Monomer. Requires Mg(2+) as cofactor.

The enzyme catalyses adenosine(37) in tRNA + dimethylallyl diphosphate = N(6)-dimethylallyladenosine(37) in tRNA + diphosphate. In terms of biological role, catalyzes the transfer of a dimethylallyl group onto the adenine at position 37 in tRNAs that read codons beginning with uridine, leading to the formation of N6-(dimethylallyl)adenosine (i(6)A). The polypeptide is tRNA dimethylallyltransferase (Pseudomonas syringae pv. tomato (strain ATCC BAA-871 / DC3000)).